The primary structure comprises 734 residues: Cytoplasmic polyadenylation element-binding protein 3 (734 aa).

3 disordered regions span residues 1-31, 98-185, and 220-283; these read MDRN…RNVP, GSKK…AARN, and RGSL…LPPR. Over residues 16 to 26 the composition is skewed to basic and acidic residues; the sequence is PAEHPGDEKSG. Composition is skewed to low complexity over residues 121-140 and 232-242; these read SRRT…SPSR and KSFSSTTTSSS. Residues 243 to 256 are compositionally biased toward basic and acidic residues; the sequence is PEKEREKEKEKIEQ. A compositionally biased stretch (polar residues) spans 259–275; the sequence is YGTTQRQSVNSQQSSAS. Residues 294–316 form the RRM domain; it reads IFVGGVPWDITEAALKDSFGEFG. Disordered regions lie at residues 564–593 and 630–657; these read KAYQ…SNNS and TVYD…SNSN. A compositionally biased stretch (low complexity) spans 576-593; it reads LSSNSPSKARDGQNSNNS.

Its function is as follows. Cytoplasmic polyadenylation element binding protein that binds to and regulates the translation of specific mRNAs. The chain is Cytoplasmic polyadenylation element-binding protein 3 (cpb-3) from Caenorhabditis japonica.